A 93-amino-acid polypeptide reads, in one-letter code: RNA-binding protein Hfq (93 aa).

In terms of domain architecture, Sm spans 9 to 68 (DPFLNALRRERVPVSIYLVNGIKLQGQVESFDQFVILLKNTVSQMVYKHAISTVVPARPF). Positions 70–93 (VNSHTAAPSPAGGFNGQQDDNNDQ) are disordered.

Belongs to the Hfq family. Homohexamer.

In terms of biological role, RNA chaperone that binds small regulatory RNA (sRNAs) and mRNAs to facilitate mRNA translational regulation in response to envelope stress, environmental stress and changes in metabolite concentrations. Also binds with high specificity to tRNAs. The chain is RNA-binding protein Hfq from Shewanella sediminis (strain HAW-EB3).